A 413-amino-acid chain; its full sequence is Corticotropin-releasing factor receptor 2 (413 aa).

A signal peptide (not cleaved) is located at residues 1–22 (MDSTIFEIIIDEFDANCSLLDA). At 1 to 110 (MDSTIFEIII…CVPILDNKRK (110 aa)) the chain is on the extracellular side. A glycan (N-linked (GlcNAc...) asparagine) is linked at Asn-16. Cystine bridges form between Cys-17-Cys-53, Cys-43-Cys-86, and Cys-67-Cys-101. 3 N-linked (GlcNAc...) asparagine glycosylation sites follow: Asn-77, Asn-89, and Asn-97. A helical transmembrane segment spans residues 111–141 (YALHYKIALIINYLGHCISILALVIAFLLFL). Residues 142-148 (CLRSIRC) lie on the Cytoplasmic side of the membrane. The chain crosses the membrane as a helical span at residues 149-173 (LRNIIHWNLITTFILRNIMWFLLQM). The Extracellular segment spans residues 174–187 (IDHNIHESNEVWCR). Cys-186 and Cys-256 are disulfide-bonded. The helical transmembrane segment at 188–216 (CITTIYNYFVVTNFFWMFVEGCYLHTAIV) threads the bilayer. At 217–223 (MTYSTDK) the chain is on the cytoplasmic side. A helical transmembrane segment spans residues 224–251 (LRKWVFLFIGWCIPSPIIVTWAICKLFY). Topologically, residues 252 to 267 (ENEQCWIGKEPGKYID) are extracellular. The helical transmembrane segment at 268–293 (YIYQGRVILVLLINFVFLFNIVRILM) threads the bilayer. Topologically, residues 294–304 (TKLRASTTSET) are cytoplasmic. The helical transmembrane segment at 305–329 (IQYRKAVKATLVLLPLLGITYMLFF) threads the bilayer. The Extracellular portion of the chain corresponds to 330–336 (VNPGEDD). The chain crosses the membrane as a helical span at residues 337-366 (VSQIVFIYFNSFLQSFQGFFVSVFYCFLNG). The Cytoplasmic portion of the chain corresponds to 367 to 413 (EVRSAARKRWHRWQDHHSLRVRVARAMSIPTSPTRISFHSIKQTAAV).

This sequence belongs to the G-protein coupled receptor 2 family. An N-glycosylation site within the signal peptide impedes its proper cleavage and function.

The protein resides in the cell membrane. Functionally, G-protein coupled receptor for CRH (corticotropin-releasing factor), UCN (urocortin), UCN2 and UCN3. Has high affinity for UCN. Ligand binding causes a conformation change that triggers signaling via guanine nucleotide-binding proteins (G proteins) and down-stream effectors, such as adenylate cyclase. Promotes the activation of adenylate cyclase, leading to increased intracellular cAMP levels. The protein is Corticotropin-releasing factor receptor 2 (crhr2) of Xenopus laevis (African clawed frog).